The sequence spans 210 residues: HTH-type transcriptional regulator MtrR (210 aa).

The HTH tetR-type domain occupies 9-69 (LKTKEHLMLA…ALFQRICDDI (61 aa)). Residues 32–51 (SLNEIAQAAGVTRGALYWHF) constitute a DNA-binding region (H-T-H motif).

Homodimer. Binds to DNA as a pair of dimers.

With respect to regulation, DNA binding is affected significantly by increasing the NaCl concentration. In terms of biological role, controls the permeability of the cell envelope to hydrophobic compounds such as antibiotics and detergents. Represses transcription of the mtrCDE-encoded efflux pump by binding within the mtrCDE promoter. Also negatively regulates the expression of farR, by binding to its promoter region, leading indirectly to the positive regulation of expression of the farAB-encoded efflux pump. The chain is HTH-type transcriptional regulator MtrR from Neisseria gonorrhoeae.